Consider the following 193-residue polypeptide: Adenine phosphoribosyltransferase (193 aa).

This sequence belongs to the purine/pyrimidine phosphoribosyltransferase family. As to quaternary structure, homodimer.

It localises to the cytoplasm. The enzyme catalyses AMP + diphosphate = 5-phospho-alpha-D-ribose 1-diphosphate + adenine. It participates in purine metabolism; AMP biosynthesis via salvage pathway; AMP from adenine: step 1/1. Catalyzes a salvage reaction resulting in the formation of AMP, that is energically less costly than de novo synthesis. This chain is Adenine phosphoribosyltransferase, found in Chromobacterium violaceum (strain ATCC 12472 / DSM 30191 / JCM 1249 / CCUG 213 / NBRC 12614 / NCIMB 9131 / NCTC 9757 / MK).